The primary structure comprises 202 residues: Dephospho-CoA kinase (202 aa).

One can recognise a DPCK domain in the interval 6-202; sequence KVSITGDLSS…EYFYALKGAL (197 aa). 14-19 contacts ATP; sequence SSGKTE.

This sequence belongs to the CoaE family.

It is found in the cytoplasm. The catalysed reaction is 3'-dephospho-CoA + ATP = ADP + CoA + H(+). Its pathway is cofactor biosynthesis; coenzyme A biosynthesis; CoA from (R)-pantothenate: step 5/5. In terms of biological role, catalyzes the phosphorylation of the 3'-hydroxyl group of dephosphocoenzyme A to form coenzyme A. This Chlamydia caviae (strain ATCC VR-813 / DSM 19441 / 03DC25 / GPIC) (Chlamydophila caviae) protein is Dephospho-CoA kinase.